The chain runs to 87 residues: Kappa-3-bungarotoxin (87 aa).

Residues 1–21 (MKTLLLSLVVVTIVCLDLGYT) form the signal peptide. 5 disulfide bridges follow: cysteine 24–cysteine 42, cysteine 35–cysteine 63, cysteine 48–cysteine 52, cysteine 67–cysteine 79, and cysteine 80–cysteine 85.

Belongs to the three-finger toxin family. Long-chain subfamily. Kappa-neurotoxin sub-subfamily. As to quaternary structure, homodimer and heterodimer with kappa 2-bungarotoxin; non-covalently-linked. As to expression, expressed by the venom gland.

The protein localises to the secreted. In terms of biological role, postsynaptic neurotoxin that binds and inhibits neuronal nicotinic acetylcholine receptors (nAChR) with high affinity (IC(50)&lt;100 nM). Is a selective, and slowly reversible antagonist of alpha-3/CHRNA3-containing and some alpha-4/CHRNA4-containing AChRs. This chain is Kappa-3-bungarotoxin, found in Bungarus multicinctus (Many-banded krait).